Reading from the N-terminus, the 351-residue chain is Apolipoprotein L4 (351 aa).

An N-terminal signal peptide occupies residues 1 to 21 (MEGAALLKIFVVCIWVQQNHP).

It belongs to the apolipoprotein L family. As to expression, widely expressed; the highest levels are in spinal cord, placenta, adrenal gland; also detected in spleen, bone marrow, uterus, trachea, mammary gland and testis; levels are low in brain, heart and pancreas.

It localises to the secreted. May play a role in lipid exchange and transport throughout the body. May participate in reverse cholesterol transport from peripheral cells to the liver. The protein is Apolipoprotein L4 (APOL4) of Homo sapiens (Human).